Here is a 299-residue protein sequence, read N- to C-terminus: Protease HtpX homolog (299 aa).

The next 2 helical transmembrane spans lie at 14–34 and 39–59; these read WLLL…VGYL and GFGG…TMIF. His-143 is a Zn(2+) binding site. Residue Glu-144 is part of the active site. His-147 contributes to the Zn(2+) binding site. 2 helical membrane-spanning segments follow: residues 153–173 and 198–218; these read IRIS…AVMA and IILL…ATLV. Glu-227 is a binding site for Zn(2+).

This sequence belongs to the peptidase M48B family. Zn(2+) is required as a cofactor.

It localises to the cell membrane. The sequence is that of Protease HtpX homolog from Streptococcus thermophilus (strain ATCC BAA-491 / LMD-9).